A 557-amino-acid chain; its full sequence is Formate--tetrahydrofolate ligase 2 (557 aa).

66–73 (TPAGEGKT) serves as a coordination point for ATP.

This sequence belongs to the formate--tetrahydrofolate ligase family.

The catalysed reaction is (6S)-5,6,7,8-tetrahydrofolate + formate + ATP = (6R)-10-formyltetrahydrofolate + ADP + phosphate. It functions in the pathway one-carbon metabolism; tetrahydrofolate interconversion. This chain is Formate--tetrahydrofolate ligase 2, found in Streptococcus pyogenes serotype M28 (strain MGAS6180).